The following is a 1151-amino-acid chain: Nardilysin (1151 aa).

Residues 1-20 (MLRRVTVAAVCATRRKLCEA) form the signal peptide. Disordered stretches follow at residues 53 to 108 (RNKA…KSPS) and 133 to 207 (MEGK…KKTT). A phosphoserine mark is found at serine 86, serine 94, and serine 96. A compositionally biased stretch (acidic residues) spans 141 to 198 (TDDEEEEEVEEEEEDDDEDSGAEIEDDDEEGFDDEDEFDDEHDDDLDTEDNELEELEE). Zn(2+) is bound at residue histidine 233. The active-site Proton acceptor is glutamate 236. The Zn(2+) site is built by histidine 237 and glutamate 314.

Belongs to the peptidase M16 family. Interacts with BACE1 and NRG1. It depends on Zn(2+) as a cofactor. As to expression, primarily in adult heart, skeletal muscle, and testis and at much lower levels in other tissues.

The protein resides in the mitochondrion. It localises to the cell projection. It is found in the dendrite. It carries out the reaction Hydrolysis of polypeptides, preferably at -Xaa-|-Arg-Lys-, and less commonly at -Arg-|-Arg-Xaa-, in which Xaa is not Arg or Lys.. Cleaves peptide substrates on the N-terminus of arginine residues in dibasic pairs. Is a critical activator of BACE1- and ADAM17-mediated pro-neuregulin ectodomain shedding, involved in the positive regulation of axonal maturation and myelination. Required for proper functioning of 2-oxoglutarate dehydrogenase (OGDH). The polypeptide is Nardilysin (Homo sapiens (Human)).